A 40-amino-acid chain; its full sequence is Photosystem II reaction center protein J (40 aa).

Residues 8–28 form a helical membrane-spanning segment; the sequence is IPLWIIGTVTGIFGIGLIGIF.

It belongs to the PsbJ family. In terms of assembly, PSII is composed of 1 copy each of membrane proteins PsbA, PsbB, PsbC, PsbD, PsbE, PsbF, PsbH, PsbI, PsbJ, PsbK, PsbL, PsbM, PsbT, PsbX, PsbY, PsbZ, Psb30/Ycf12, at least 3 peripheral proteins of the oxygen-evolving complex and a large number of cofactors. It forms dimeric complexes.

Its subcellular location is the plastid membrane. Its function is as follows. One of the components of the core complex of photosystem II (PSII). PSII is a light-driven water:plastoquinone oxidoreductase that uses light energy to abstract electrons from H(2)O, generating O(2) and a proton gradient subsequently used for ATP formation. It consists of a core antenna complex that captures photons, and an electron transfer chain that converts photonic excitation into a charge separation. The polypeptide is Photosystem II reaction center protein J (Cuscuta reflexa (Southern Asian dodder)).